Consider the following 81-residue polypeptide: Defensin-like protein 115 (81 aa).

The N-terminal stretch at 1–24 (MAITKKMLVVFLLAFLFVTSSVHC) is a signal peptide. 4 disulfide bridges follow: C40-C78, C46-C69, C54-C76, and C58-C77.

It belongs to the DEFL family.

It is found in the secreted. The polypeptide is Defensin-like protein 115 (Arabidopsis thaliana (Mouse-ear cress)).